We begin with the raw amino-acid sequence, 127 residues long: Large ribosomal subunit protein bL17 (127 aa).

The protein belongs to the bacterial ribosomal protein bL17 family. Part of the 50S ribosomal subunit. Contacts protein L32.

The chain is Large ribosomal subunit protein bL17 from Lactobacillus gasseri (strain ATCC 33323 / DSM 20243 / BCRC 14619 / CIP 102991 / JCM 1131 / KCTC 3163 / NCIMB 11718 / NCTC 13722 / AM63).